The sequence spans 192 residues: Thymidine kinase (192 aa).

Residues 9-16 and 87-90 each bind ATP; these read SSMNAGKS and DEAQ. The Proton acceptor role is filled by E88. Residues C145, C147, C182, and H185 each coordinate Zn(2+).

The protein belongs to the thymidine kinase family. Homotetramer.

The protein resides in the cytoplasm. It carries out the reaction thymidine + ATP = dTMP + ADP + H(+). The sequence is that of Thymidine kinase from Colwellia psychrerythraea (strain 34H / ATCC BAA-681) (Vibrio psychroerythus).